A 98-amino-acid chain; its full sequence is MKATTIERIEDKLYQNRYLVDTRRPHITVRPHRSPSPSLLALTQICPAKCYEVNEIGQVAIVSDGCLECGTCRVLAEASGDIKWNYPRGGFGVLFKFG.

To ferredoxins from P.putida and C.tartarivorum, ferredoxin I from A.vinelandii, ferredoxin II from D.desulfuricans.

In terms of biological role, could be a 3Fe-4S cluster-containing protein. This Rhizobium leguminosarum protein is Ferredoxin-like protein (fixX).